Consider the following 567-residue polypeptide: Hydroxylamine reductase 2 (567 aa).

Cys5, Cys8, Cys17, and Cys23 together coordinate [4Fe-4S] cluster. 8 residues coordinate hybrid [4Fe-2O-2S] cluster: His262, Glu286, Cys330, Cys421, Cys449, Cys474, Glu509, and Lys511. Residue Cys421 is modified to Cysteine persulfide.

This sequence belongs to the HCP family. [4Fe-4S] cluster is required as a cofactor. It depends on hybrid [4Fe-2O-2S] cluster as a cofactor.

The protein localises to the cytoplasm. It catalyses the reaction A + NH4(+) + H2O = hydroxylamine + AH2 + H(+). Catalyzes the reduction of hydroxylamine to form NH(3) and H(2)O. This Clostridium acetobutylicum (strain ATCC 824 / DSM 792 / JCM 1419 / IAM 19013 / LMG 5710 / NBRC 13948 / NRRL B-527 / VKM B-1787 / 2291 / W) protein is Hydroxylamine reductase 2.